Reading from the N-terminus, the 183-residue chain is ATP-dependent protease subunit HslV (183 aa).

The active site involves T12. Residues A166, C169, and T172 each contribute to the Na(+) site.

The protein belongs to the peptidase T1B family. HslV subfamily. As to quaternary structure, a double ring-shaped homohexamer of HslV is capped on each side by a ring-shaped HslU homohexamer. The assembly of the HslU/HslV complex is dependent on binding of ATP.

It localises to the cytoplasm. It catalyses the reaction ATP-dependent cleavage of peptide bonds with broad specificity.. Allosterically activated by HslU binding. Protease subunit of a proteasome-like degradation complex believed to be a general protein degrading machinery. The sequence is that of ATP-dependent protease subunit HslV from Afipia carboxidovorans (strain ATCC 49405 / DSM 1227 / KCTC 32145 / OM5) (Oligotropha carboxidovorans).